Reading from the N-terminus, the 351-residue chain is SLAM family member 6 (351 aa).

Residues 1 to 30 (MAVSRAPAPDSACQRMVWLFPLVFCLGSGS) form the signal peptide. Residues 31–239 (EVSQSSSDPQ…KGVLTNPPWN (209 aa)) lie on the Extracellular side of the membrane. The Ig-like V-type domain maps to 36–130 (SSDPQLMNGV…YTAQITTKDS (95 aa)). N82, N101, N112, N152, N159, N172, N186, N193, and N218 each carry an N-linked (GlcNAc...) asparagine glycan. The region spanning 147–210 (NLETTNYTLL…RNSGDQTYVC (64 aa)) is the Ig-like C2-type domain. 2 disulfides stabilise this stretch: C162–C229 and C168–C210. Residues 240–262 (AVWFMTTISIISAVILIFVCWSI) form a helical membrane-spanning segment. Topologically, residues 263–351 (HVWKRRGSLP…KVNTLINYNS (89 aa)) are cytoplasmic. Residues 272 to 295 (PLTSQHPESSQSTDGPGSPGNTVY) are disordered. 2 short sequence motifs (ITSM) span residues 293–298 (TVYAQV) and 317–322 (TIYSIV). Residue Y319 is modified to Phosphotyrosine.

As to quaternary structure, homodimer. Interacts with PTN6 and, upon phosphorylation, with PTN11 and SH2D1A/SAP. Post-translationally, phosphorylated. In terms of tissue distribution, expressed on hematopoietic cells. Isoform 3 is expressed in thymocytes and B lymphocytes of C57Bl/6 strain.

The protein resides in the cell membrane. Functionally, self-ligand receptor of the signaling lymphocytic activation molecule (SLAM) family. SLAM receptors triggered by homo- or heterotypic cell-cell interactions are modulating the activation and differentiation of a wide variety of immune cells and thus are involved in the regulation and interconnection of both innate and adaptive immune response. Activities are controlled by presence or absence of small cytoplasmic adapter proteins, SH2D1A/SAP and/or SH2D1B/EAT-2. Triggers cytolytic activity only in natural killer cells (NK) expressing high surface densities of natural cytotoxicity receptors. Positive signaling in NK cells implicates phosphorylation of VAV1. NK cell activation seems to depend on SH2D1B and not on SH2D1A. In conjunction with SLAMF1 controls the transition between positive selection and the subsequent expansion and differentiation of the thymocytic natural killer T (NKT) cell lineage. Promotes T cell differentiation into a helper T-cell Th17 phenotype leading to increased IL-17 secretion; the costimulatory activity requires SH2D1A. Promotes recruitment of RORC to the IL-17 promoter. In conjunction with SLAMF1 and CD84/SLAMF5 may be a negative regulator of the humoral immune response. In the absence of SH2D1A/SAP can transmit negative signals to CD4(+) T-cells and NKT cells. Negatively regulates germinal center formation by inhibiting T-cell:B-cell adhesion; the function probably implicates increased association with PTPN6/SHP-1 via ITSMs in absence of SH2D1A/SAP. However, reported to mediated T-cell adhesion, to participate in stable T-cell:B-cell interactions and to be involved in maintaining B-cell tolerance in germinal centers and in preventing autoimmunity. Involved in regulation of autoimmunity. Isoform 3 may be suppressor of pathogenic T-cell proliferation. The chain is SLAM family member 6 (Slamf6) from Mus musculus (Mouse).